The sequence spans 1855 residues: Collagen alpha-1(XXVII) chain (1855 aa).

A signal peptide spans 1-48 (MGLARATAGLGPCCPPAPALLGAGLRWGGFLFAWILVSFSCHLASTQG). A propeptide spans 49 to 618 (APEDVDVLQR…PEPTPFLMLM (570 aa)) (N-terminal propeptide). One can recognise a Laminin G-like domain in the interval 81–246 (PSGFIFTQRA…NYCAHLRERC (166 aa)). 2 N-linked (GlcNAc...) asparagine glycosylation sites follow: Asn281 and Asn349. Disordered stretches follow at residues 317-428 (DVSK…SATV), 511-580 (PPLG…SQLS), 617-787 (LMGP…GFPG), and 838-1617 (GGVG…HPVQ). Polar residues-rich tracts occupy residues 382-427 (LSVT…SSAT) and 520-532 (MMPS…STPA). Residues 563 to 573 (TARDASPRDLT) are compositionally biased toward basic and acidic residues. Collagen-like domains lie at 619–673 (GPPG…GDPG), 682–741 (GAKG…PGPV), 751–810 (GYIG…PGPP), 826–885 (GYPG…PGPM), 886–945 (GKAG…EGPM), 946–1005 (GPPG…VGEK), 1006–1047 (GDRG…PGSR), 1048–1105 (GLPG…GAKG), 1108–1155 (GIPG…PGLP), 1156–1215 (GDSG…KGQE), 1216–1275 (GLKG…PGTP), 1276–1330 (GPKG…GEDG), and 1334–1393 (GAPG…KGSK). The tract at residues 619–1612 (GPPGSKGDCG…RGRPGPPGPP (994 aa)) is triple-helical region. The span at 630-663 (PGPPGLPGLPGSPGPRGPRGPPGPFGNPGLPGPP) shows a compositional bias: pro residues. A compositionally biased stretch (low complexity) spans 708–728 (PGAAGHPGEQGQPGPEGSPGA). The segment covering 905-918 (FPGDIGPPGDNGPE) has biased composition (low complexity). Gly residues predominate over residues 1027-1036 (GTPGGVGDPG). Low complexity-rich tracts occupy residues 1083–1095 (RGRP…QGAA), 1121–1131 (LPGEPGSQGPQ), and 1161–1176 (KGDL…QGLI). Basic and acidic residues-rich tracts occupy residues 1196–1221 (LKGD…KGEE), 1320–1332 (KGEK…DGKT), and 1344–1354 (PVGDRGDRGEP). Low complexity-rich tracts occupy residues 1369–1378 (RGEPGQQGQP) and 1404–1431 (KAGA…RQGP). 3 Collagen-like domains span residues 1433–1492 (GMAG…SGLP), 1493–1552 (GQLG…KGIQ), and 1553–1612 (GPRG…PGPP). Residues 1566 to 1581 (IIGPPGMLGPSGLPGP) show a composition bias toward low complexity. The segment covering 1597–1614 (RGPPGPRGRPGPPGPPWH) has biased composition (pro residues). Residues 1616–1855 (VQFQQDDLEA…RLEVGPACFL (240 aa)) constitute a propeptide, C-terminal propeptide. In terms of domain architecture, Fibrillar collagen NC1 spans 1655 to 1855 (GEIFKTLHYL…RLEVGPACFL (201 aa)). 3 disulfide bridges follow: Cys1685/Cys1717, Cys1726/Cys1853, and Cys1762/Cys1806. The Ca(2+) site is built by Asp1703, Asn1705, Cys1708, and Asp1711. An N-linked (GlcNAc...) asparagine glycan is attached at Asn1764.

It belongs to the fibrillar collagen family.

It is found in the secreted. The protein resides in the extracellular space. The protein localises to the extracellular matrix. In terms of biological role, plays a role during the calcification of cartilage and the transition of cartilage to bone. The protein is Collagen alpha-1(XXVII) chain (Col27a1) of Rattus norvegicus (Rat).